Reading from the N-terminus, the 147-residue chain is Large ribosomal subunit protein bL9 (147 aa).

Belongs to the bacterial ribosomal protein bL9 family.

Its function is as follows. Binds to the 23S rRNA. The protein is Large ribosomal subunit protein bL9 of Flavobacterium psychrophilum (strain ATCC 49511 / DSM 21280 / CIP 103535 / JIP02/86).